Reading from the N-terminus, the 30-residue chain is SFSVNPAVDILQHRYMEKVAQNNRNFLNRV.

Valine amide is present on Val30.

Belongs to the sauvagine/corticotropin-releasing factor/urotensin I family.

The protein resides in the secreted. Regulation of fluid secretion. The chain is Diuretic hormone 2 from Manduca sexta (Tobacco hawkmoth).